We begin with the raw amino-acid sequence, 305 residues long: Oxygen-dependent coproporphyrinogen-III oxidase (305 aa).

Ser98 provides a ligand contact to substrate. A divalent metal cation contacts are provided by His102 and His112. Residue His112 is the Proton donor of the active site. Residue 114-116 coordinates substrate; sequence NVR. A divalent metal cation-binding residues include His151 and His181. Positions 246-281 are important for dimerization; the sequence is YVEFNLVYDRGTLFGLQSGGRTESILMSMPPLARWE. 264-266 contributes to the substrate binding site; it reads GGR.

This sequence belongs to the aerobic coproporphyrinogen-III oxidase family. Homodimer. The cofactor is a divalent metal cation.

The protein localises to the cytoplasm. The enzyme catalyses coproporphyrinogen III + O2 + 2 H(+) = protoporphyrinogen IX + 2 CO2 + 2 H2O. The protein operates within porphyrin-containing compound metabolism; protoporphyrin-IX biosynthesis; protoporphyrinogen-IX from coproporphyrinogen-III (O2 route): step 1/1. In terms of biological role, involved in the heme biosynthesis. Catalyzes the aerobic oxidative decarboxylation of propionate groups of rings A and B of coproporphyrinogen-III to yield the vinyl groups in protoporphyrinogen-IX. The chain is Oxygen-dependent coproporphyrinogen-III oxidase from Vibrio vulnificus (strain YJ016).